The primary structure comprises 588 residues: Adenine deaminase (588 aa).

This sequence belongs to the metallo-dependent hydrolases superfamily. Adenine deaminase family. In terms of assembly, homodimer. The cofactor is Mn(2+).

The catalysed reaction is adenine + H2O + H(+) = hypoxanthine + NH4(+). The polypeptide is Adenine deaminase (Escherichia coli O139:H28 (strain E24377A / ETEC)).